The chain runs to 835 residues: Protein VP3 (835 aa).

An N7-methyltransferase activity region spans residues 171–245 (KKIKERMTTS…KNTIKLKQER (75 aa)). The 2'-O-methyltransferase activity stretch occupies residues 246 to 428 (WLGKRVSQFD…NNVKRFIPKG (183 aa)). The tract at residues 429–555 (VLYSFINNVI…NHLFILNGTD (127 aa)) is N7-methyltransferase activity. A GTase/RTPase activity region spans residues 556–692 (KYYKLDQFAN…NYINKVYSIT (137 aa)). Residues 693-835 (YADDPNYFIG…RGDTMFDMSE (143 aa)) are 2'-5'-phosphodiesterase activity. Residues H718, T720, H797, and T799 each act as for 2'-5'-phosphodiesterase activity in the active site.

Belongs to the rotavirus VP3 family. As to quaternary structure, interacts with VP1. Interacts with VP2.

It localises to the virion. The catalysed reaction is a 5'-end diphospho-ribonucleoside in mRNA + GTP + H(+) = a 5'-end (5'-triphosphoguanosine)-ribonucleoside in mRNA + diphosphate. It carries out the reaction a 5'-end (5'-triphosphoguanosine)-ribonucleoside in mRNA + S-adenosyl-L-methionine = a 5'-end (N(7)-methyl 5'-triphosphoguanosine)-ribonucleoside in mRNA + S-adenosyl-L-homocysteine. The enzyme catalyses 5'-triphosphoadenylyl-(2'-&gt;5')-adenylyl-(2'-&gt;5')-adenosine + 2 H2O = 2 AMP + ATP + 2 H(+). In terms of biological role, multifunctional enzyme involved in mRNA capping. Catalyzes the formation of the 5' cap structure on the viral plus-strand transcripts. Specifically binds to GTP and displays guanylyltransferase and methyltransferase activities. Has affinity for ssRNA but not for dsRNA. Capping activity is non-specific and caps RNAs that initiate with either a G or an A residue. Together with VP1 polymerase, forms a VP1-VP3 complex positioned near the channels situated at each of the five-fold vertices of the core. Following infection, the outermost layer of the virus is lost, leaving a double-layered particle (DLP) made up of the core and VP6 shell. VP1 then catalyzes the transcription of fully conservative plus-strand genomic RNAs that are capped by VP3 and extruded through the DLP's channels into the cytoplasm where they function as mRNAs for translation of viral proteins. DLPs probably have an RNA triphosphatase activity as well, whereas open cores do not. Its function is as follows. Counteracts the host innate immune response thanks to its phosphodiesterase that degrades the 5'-triphosphorylated, 2'-5' linked adenylate oligomers produced by the host cell IFN-inducible 2',5'-oligoadenylate synthetase (OAS). The host RNaseL is therefore not activated. This is Protein VP3 from Homo sapiens (Human).